Consider the following 437-residue polypeptide: Protein translocase subunit SecY (437 aa).

10 consecutive transmembrane segments (helical) span residues 19-39 (LFTLAIIVVYRVGTHIPIPGV), 69-89 (LLQITIFALGIMPYITASIIL), 122-142 (VALAILQGTGLVATARSAPLF), 157-177 (IFTTITMVICMTAGTCVVMWL), 189-209 (GMSILMFISIAATFPSALWAI), 219-239 (WIEFGTVIAVGLIMVALVVFV), 276-296 (VIPVIFASSLLYIPALVAQFA), 316-336 (PIYIVTYFLLIVFFAFFYVAI), 378-398 (GSLYLGLIALVPTMALVGFGA), and 400-420 (QNFPFGGTSILIIVGVGLETV).

It belongs to the SecY/SEC61-alpha family. As to quaternary structure, component of the Sec protein translocase complex. Heterotrimer consisting of SecY, SecE and SecG subunits. The heterotrimers can form oligomers, although 1 heterotrimer is thought to be able to translocate proteins. Interacts with the ribosome. Interacts with SecDF, and other proteins may be involved. Interacts with SecA.

Its subcellular location is the cell membrane. The central subunit of the protein translocation channel SecYEG. Consists of two halves formed by TMs 1-5 and 6-10. These two domains form a lateral gate at the front which open onto the bilayer between TMs 2 and 7, and are clamped together by SecE at the back. The channel is closed by both a pore ring composed of hydrophobic SecY resides and a short helix (helix 2A) on the extracellular side of the membrane which forms a plug. The plug probably moves laterally to allow the channel to open. The ring and the pore may move independently. In Streptomyces galbus, this protein is Protein translocase subunit SecY.